The following is a 199-amino-acid chain: Holliday junction branch migration complex subunit RuvA (199 aa).

Positions Met1–Ala62 are domain I. Positions Lys63–Leu141 are domain II. The segment at Gln142 to Asp152 is flexible linker. The segment at Asp152 to Arg199 is domain III.

This sequence belongs to the RuvA family. As to quaternary structure, homotetramer. Forms an RuvA(8)-RuvB(12)-Holliday junction (HJ) complex. HJ DNA is sandwiched between 2 RuvA tetramers; dsDNA enters through RuvA and exits via RuvB. An RuvB hexamer assembles on each DNA strand where it exits the tetramer. Each RuvB hexamer is contacted by two RuvA subunits (via domain III) on 2 adjacent RuvB subunits; this complex drives branch migration. In the full resolvosome a probable DNA-RuvA(4)-RuvB(12)-RuvC(2) complex forms which resolves the HJ.

It localises to the cytoplasm. In terms of biological role, the RuvA-RuvB-RuvC complex processes Holliday junction (HJ) DNA during genetic recombination and DNA repair, while the RuvA-RuvB complex plays an important role in the rescue of blocked DNA replication forks via replication fork reversal (RFR). RuvA specifically binds to HJ cruciform DNA, conferring on it an open structure. The RuvB hexamer acts as an ATP-dependent pump, pulling dsDNA into and through the RuvAB complex. HJ branch migration allows RuvC to scan DNA until it finds its consensus sequence, where it cleaves and resolves the cruciform DNA. This Desulforamulus reducens (strain ATCC BAA-1160 / DSM 100696 / MI-1) (Desulfotomaculum reducens) protein is Holliday junction branch migration complex subunit RuvA.